The primary structure comprises 649 residues: Acetyl-coenzyme A synthetase (649 aa).

CoA contacts are provided by residues 191 to 194, Thr-311, and Asn-335; that span reads RAGR. Residues 387-389, 411-416, Asp-500, and Arg-515 each bind ATP; these read GEP and DTWWQT. Ser-523 lines the CoA pocket. An ATP-binding site is contributed by Arg-526. Residues Val-537, Phe-539, and Ile-542 each coordinate Mg(2+). Arg-584 provides a ligand contact to CoA. Lys-609 carries the post-translational modification N6-acetyllysine.

This sequence belongs to the ATP-dependent AMP-binding enzyme family. Mg(2+) serves as cofactor. In terms of processing, acetylated. Deacetylation by the SIR2-homolog deacetylase activates the enzyme.

The enzyme catalyses acetate + ATP + CoA = acetyl-CoA + AMP + diphosphate. Catalyzes the conversion of acetate into acetyl-CoA (AcCoA), an essential intermediate at the junction of anabolic and catabolic pathways. AcsA undergoes a two-step reaction. In the first half reaction, AcsA combines acetate with ATP to form acetyl-adenylate (AcAMP) intermediate. In the second half reaction, it can then transfer the acetyl group from AcAMP to the sulfhydryl group of CoA, forming the product AcCoA. The polypeptide is Acetyl-coenzyme A synthetase (Photobacterium profundum (strain SS9)).